Consider the following 310-residue polypeptide: GPN-loop GTPase 2 (310 aa).

Residue Ala-2 is modified to N-acetylalanine. 19–24 is a binding site for GTP; it reads GSGKTT. A Gly-Pro-Asn (GPN)-loop; involved in dimer interface motif is present at residues 76–78; it reads GPN. 178–181 is a binding site for GTP; sequence SKMD.

It belongs to the GPN-loop GTPase family. Heterodimers with GPN1 or GPN3. Binds to RNA polymerase II (RNAPII).

In terms of biological role, small GTPase required for proper localization of RNA polymerase II and III (RNAPII and RNAPIII). May act at an RNAP assembly step prior to nuclear import. This is GPN-loop GTPase 2 from Sus scrofa (Pig).